Here is a 578-residue protein sequence, read N- to C-terminus: Putative transporter B0361.11 (578 aa).

The interval 1–30 (MSISRRSYEQFDEMKSENQENNSKKKSSER) is disordered. 11 consecutive transmembrane segments (helical) span residues 51-71 (IFTY…MYIM), 148-168 (FGLT…SMLA), 182-202 (ILAF…IFLI), 232-252 (AWIT…TLLV), 263-283 (YFIV…LPES), 339-359 (IWLL…YFAI), 373-393 (AFLY…PLMM), 399-419 (MIVI…TVFL), 426-446 (LVIM…HPIW), 457-477 (SLCF…SPYV), and 486-506 (WIPF…AFML). A compositionally biased stretch (low complexity) spans 532–550 (AYRRSKSSSSSVSALSKTS). Positions 532 to 561 (AYRRSKSSSSSVSALSKTSVRSKKTLSSES) are disordered.

The protein belongs to the major facilitator superfamily. Sugar transporter (TC 2.A.1.1) family.

It localises to the membrane. This Caenorhabditis elegans protein is Putative transporter B0361.11.